A 1655-amino-acid chain; its full sequence is Nucleoporin NUP188 (1655 aa).

Residues 35–62 (KQLAQIRQFLKANKTNLIESLNTIRQNV) adopt a coiled-coil conformation. The interval 250–271 (LSYLSETLISRISSLFTITTIL) is leucine-zipper. S340 bears the Phosphoserine mark. K406 participates in a covalent cross-link: Glycyl lysine isopeptide (Lys-Gly) (interchain with G-Cter in ubiquitin).

Belongs to the Nup188 family. As to quaternary structure, component of the nuclear pore complex (NPC). NPC constitutes the exclusive means of nucleocytoplasmic transport. NPCs allow the passive diffusion of ions and small molecules and the active, nuclear transport receptor-mediated bidirectional transport of macromolecules such as proteins, RNAs, ribonucleoparticles (RNPs), and ribosomal subunits across the nuclear envelope. Due to its 8-fold rotational symmetry, all subunits are present with 8 copies or multiples thereof. Interacts with POM152 and NIC96.

Its subcellular location is the nucleus. The protein localises to the nuclear pore complex. It is found in the nucleus membrane. Functions as a component of the nuclear pore complex (NPC). NPC components, collectively referred to as nucleoporins (NUPs), can play the role of both NPC structural components and of docking or interaction partners for transiently associated nuclear transport factors. NUP188 probably plays an important role in NPC assembly and organization. In Saccharomyces cerevisiae (strain ATCC 204508 / S288c) (Baker's yeast), this protein is Nucleoporin NUP188 (NUP188).